Reading from the N-terminus, the 205-residue chain is UPF0301 protein AZC_0488 (205 aa).

The protein belongs to the UPF0301 (AlgH) family.

This Azorhizobium caulinodans (strain ATCC 43989 / DSM 5975 / JCM 20966 / LMG 6465 / NBRC 14845 / NCIMB 13405 / ORS 571) protein is UPF0301 protein AZC_0488.